Here is a 154-residue protein sequence, read N- to C-terminus: Jupiter microtubule associated homolog 1 (154 aa).

Position 1 is an N-acetylmethionine (methionine 1). Residues 1–19 show a composition bias toward polar residues; it reads MTTTTTFKGVDPNSRNSSR. Residues 1–154 form a disordered region; sequence MTTTTTFKGV…PGGKSSLVLG (154 aa). Threonine 2 bears the N-acetylthreonine; in Hematological and neurological expressed 1 protein, N-terminally processed mark. Phosphoserine is present on residues serine 28 and serine 31. The segment covering 47-59 has biased composition (polar residues); the sequence is MASNIFGTPEENQ. At threonine 54 the chain carries Phosphothreonine. Low complexity predominate over residues 60–71; the sequence is ASWAKSAGAKSS. Residues serine 71, serine 80, serine 87, serine 88, and serine 92 each carry the phosphoserine modification. The span at 80 to 91 shows a compositional bias: polar residues; the sequence is SGLQRRNSSEAS. Residues 96–108 are compositionally biased toward basic and acidic residues; that stretch reads LDLKGEGDIHENV. The span at 125–138 shows a compositional bias: pro residues; it reads PAAPVPSPVAPAPV. A Phosphoserine modification is found at serine 131. Lysine 148 is modified (N6-acetyllysine).

Belongs to the JUPITER family. Interacts with the complex composed, at least, of APC, CTNNB1 and GSK3B; the interaction takes place with the inactive form of GSK3B (phosphorylated at 'Ser-9'). In terms of tissue distribution, expressed in testis, skeletal muscle, thymus, prostate, colon, peripheral blood cells, brain and placenta.

It is found in the nucleus. Its subcellular location is the cytoplasm. In terms of biological role, modulates negatively AKT-mediated GSK3B signaling. Induces CTNNB1 'Ser-33' phosphorylation and degradation through the suppression of the inhibitory 'Ser-9' phosphorylation of GSK3B, which represses the function of the APC:CTNNB1:GSK3B complex and the interaction with CDH1/E-cadherin in adherent junctions. Plays a role in the regulation of cell cycle and cell adhesion. Has an inhibitory role on AR-signaling pathway through the induction of receptor proteasomal degradation. The protein is Jupiter microtubule associated homolog 1 of Homo sapiens (Human).